The sequence spans 199 residues: FMN-dependent NADH:quinone oxidoreductase 2 (199 aa).

FMN contacts are provided by residues serine 10, 16 to 18 (SVS), and 96 to 99 (MYNF).

This sequence belongs to the azoreductase type 1 family. In terms of assembly, homodimer. Requires FMN as cofactor.

It carries out the reaction 2 a quinone + NADH + H(+) = 2 a 1,4-benzosemiquinone + NAD(+). The catalysed reaction is N,N-dimethyl-1,4-phenylenediamine + anthranilate + 2 NAD(+) = 2-(4-dimethylaminophenyl)diazenylbenzoate + 2 NADH + 2 H(+). Its function is as follows. Quinone reductase that provides resistance to thiol-specific stress caused by electrophilic quinones. Functionally, also exhibits azoreductase activity. Catalyzes the reductive cleavage of the azo bond in aromatic azo compounds to the corresponding amines. The protein is FMN-dependent NADH:quinone oxidoreductase 2 of Pseudomonas fluorescens (strain ATCC BAA-477 / NRRL B-23932 / Pf-5).